The chain runs to 188 residues: Large ribosomal subunit protein uL6 (188 aa).

This sequence belongs to the universal ribosomal protein uL6 family.

The chain is Large ribosomal subunit protein uL6 (RPL9) from Tetrahymena thermophila (strain SB210).